A 637-amino-acid chain; its full sequence is tRNA uridine 5-carboxymethylaminomethyl modification enzyme MnmG (637 aa).

FAD is bound by residues 15–20, isoleucine 127, and serine 182; that span reads GAGHAG. 276–290 contributes to the NAD(+) binding site; that stretch reads GPRYCPSIEDKIVRF. Position 373 (glutamine 373) interacts with FAD.

The protein belongs to the MnmG family. As to quaternary structure, homodimer. Heterotetramer of two MnmE and two MnmG subunits. It depends on FAD as a cofactor.

It localises to the cytoplasm. Functionally, NAD-binding protein involved in the addition of a carboxymethylaminomethyl (cmnm) group at the wobble position (U34) of certain tRNAs, forming tRNA-cmnm(5)s(2)U34. This Streptococcus pneumoniae (strain ATCC BAA-255 / R6) protein is tRNA uridine 5-carboxymethylaminomethyl modification enzyme MnmG.